The primary structure comprises 332 residues: tRNA N6-adenosine threonylcarbamoyltransferase (332 aa).

Fe cation is bound by residues His108 and His112. Substrate-binding positions include 129-133 (LISGG), Asp161, Glu178, and Ser258. Position 286 (Asp286) interacts with Fe cation.

Belongs to the KAE1 / TsaD family. Requires Fe(2+) as cofactor.

It is found in the cytoplasm. The catalysed reaction is L-threonylcarbamoyladenylate + adenosine(37) in tRNA = N(6)-L-threonylcarbamoyladenosine(37) in tRNA + AMP + H(+). Functionally, required for the formation of a threonylcarbamoyl group on adenosine at position 37 (t(6)A37) in tRNAs that read codons beginning with adenine. Is probably involved in the transfer of the threonylcarbamoyl moiety of threonylcarbamoyl-AMP (TC-AMP) to the N6 group of A37. This Pyrobaculum arsenaticum (strain DSM 13514 / JCM 11321 / PZ6) protein is tRNA N6-adenosine threonylcarbamoyltransferase.